The chain runs to 221 residues: Putative 5'(3')-deoxyribonucleotidase R824 (221 aa).

The Mg(2+) site is built by Asp16 and Asp18. Asp18 serves as the catalytic Nucleophile. Residues Asp18, Ser103, and Lys138 each coordinate phosphate. Asp149 lines the Mg(2+) pocket.

Belongs to the 5'(3')-deoxyribonucleotidase family. The cofactor is Mg(2+).

Dephosphorylates the 5' and 2'(3')-phosphates of deoxyribonucleotides. The polypeptide is Putative 5'(3')-deoxyribonucleotidase R824 (Acanthamoeba polyphaga mimivirus (APMV)).